The sequence spans 751 residues: Catalase-peroxidase (751 aa).

The tract at residues 1-24 (MADKCPFHNQAPKPNVAGSGTQNR) is disordered. Residues 95-241 (WHSAGTYRTF…LAAAHMGLIY (147 aa)) constitute a cross-link (tryptophyl-tyrosyl-methioninium (Trp-Tyr) (with M-267)). The Proton acceptor role is filled by His96. A cross-link (tryptophyl-tyrosyl-methioninium (Tyr-Met) (with W-95)) is located at residues 241-267 (YVNPEGPDGNPDPVAAARDIRTTFARM). Residue His282 coordinates heme b.

The protein belongs to the peroxidase family. Peroxidase/catalase subfamily. In terms of assembly, homodimer or homotetramer. Heme b serves as cofactor. In terms of processing, formation of the three residue Trp-Tyr-Met cross-link is important for the catalase, but not the peroxidase activity of the enzyme.

It localises to the cytoplasm. The catalysed reaction is H2O2 + AH2 = A + 2 H2O. The enzyme catalyses 2 H2O2 = O2 + 2 H2O. Its function is as follows. Bifunctional enzyme with both catalase and broad-spectrum peroxidase activity. The polypeptide is Catalase-peroxidase (Aspergillus oryzae (strain ATCC 42149 / RIB 40) (Yellow koji mold)).